The primary structure comprises 399 residues: Protein DDI1 homolog 2 (399 aa).

The Ubiquitin-like domain occupies 1 to 81 (MLLTVYCVRR…VILRQKENAD (81 aa)). A disordered region spans residues 99–134 (IAVPGTSNPQQRQLPRTQAQHSSPGEMASSPQGLDN). The span at 103 to 131 (GTSNPQQRQLPRTQAQHSSPGEMASSPQG) shows a compositional bias: polar residues. Thr104 is subject to Phosphothreonine. A phosphoserine mark is found at Ser121, Ser128, Ser150, and Ser194. Residue Asp252 is part of the active site. The Ubiquitin-binding motif lies at 376 to 395 (EEIADQELAEAIQKSAEDAE).

This sequence belongs to the DDI1 family. In terms of assembly, homodimer.

The protein localises to the cytoplasm. It is found in the cytosol. It localises to the chromosome. In terms of biological role, aspartic protease that mediates the cleavage of NFE2L1/NRF1 at 'Leu-104', thereby promoting release of NFE2L1/NRF1 from the endoplasmic reticulum membrane. Ubiquitination of NFE2L1/NRF1 is a prerequisite for cleavage, suggesting that DDI2 specifically recognizes and binds ubiquitinated NFE2L1/NRF1. Seems to act as a proteasomal shuttle which links the proteasome and replication fork proteins like RTF2. Required, with DDI1, for cellular survival following replication stress. Together or redudantly with DDI1, removes RTF2 from stalled forks to allow cell cycle progression after replication stress and maintains genome integrity. The sequence is that of Protein DDI1 homolog 2 from Mus musculus (Mouse).